The sequence spans 847 residues: METRYNPHAIEPRRQKQWEEAPHLAMDGRPKFYALSMFPYPSGALHMGHVRNYSITDVISRYKRMRGFNVLHPIGWDAFGLPAENAAIDRGIHPAQWTEQNIAQMREQLKRLGFAYAWEREVATCSPAYYRWTQKLFLEFWKAGLAYRKAGVVNWDPVDQTVLANEQVDAEGRSWRSGALVEKRPLEQWYLKITDYAEELLQALGTLGDWPERVRVMQENWIGKSVGAELCFPINGEPEGIRVFTTRPDTVYGVTYLVLAPEHPLVERITAPERREAVRAFVAQVQSESEIERVSEDRPKQGVSTGAVALNPFTGQAVPVWIADYVLFEYGTGAVMGVPGHDERDFVFASQYELPIRLVVQAPDGSLTEPLRAAYTEVGVLVNSGPFNGLDSPTGKLKIVEYAEQQGWGKGRVQYRLRDWLISRQRYWGCPIPMVYCPECGVVPVPDEQLPVALPGDVEFSGRGPSPLAKLEGWICVDCPQCGAPARRETDTMDTFIDSSWYFLRFADARNGAEPFSREAVDYWLPVDQYVGGIEHAILHLLYSRFFTKVLRDRGLLSFDEPFKRLLTQGMVLSNAFVDPATKKYYPPDQVEERGGAFFARPDGTPLVCAMEKMSKSKYNGIDPLTVRSEYGADTARLFVLFKAPPEKELEWSDADVRGQYSFLGRVWRTVYEFVSGEKPDRPVGEAQERDLRREVHRAIQQVGGDIEQYKFNTAIAALMKLNNAMADYPSGQSPAYKEGVYVIVKLLAPFAPHIGAELWQALGEAGDIHTSDWPALDESALVEETIVLVIQVNGKKRDDIQVPAAASEGELQELALASEAVRRHTDGKAIKKVIVVPGRLINLVVG.

A 'HIGH' region motif is present at residues 39–49; sequence PYPSGALHMGH. The 'KMSKS' region motif lies at 613–617; the sequence is KMSKS. Position 616 (K616) interacts with ATP.

Belongs to the class-I aminoacyl-tRNA synthetase family.

The protein resides in the cytoplasm. The enzyme catalyses tRNA(Leu) + L-leucine + ATP = L-leucyl-tRNA(Leu) + AMP + diphosphate. The sequence is that of Leucine--tRNA ligase from Gloeobacter violaceus (strain ATCC 29082 / PCC 7421).